Consider the following 419-residue polypeptide: Methionine aminopeptidase 2 (419 aa).

A disordered region spans residues 1 to 69 (MSTNSSNPNE…KITAIDNSYP (69 aa)). A compositionally biased stretch (basic and acidic residues) spans 11 to 29 (VMEKVQDLKIDDSKPKVDS). Residues 30 to 41 (EEQPEAESDGES) are compositionally biased toward acidic residues. The segment covering 48-61 (KKKKKKKSKKKKKI) has biased composition (basic residues). Residue His-172 coordinates substrate. Residues Asp-192, Asp-203, and His-272 each contribute to the a divalent metal cation site. His-280 serves as a coordination point for substrate. 2 residues coordinate a divalent metal cation: Glu-305 and Glu-400.

It belongs to the peptidase M24A family. Methionine aminopeptidase eukaryotic type 2 subfamily. Co(2+) serves as cofactor. It depends on Zn(2+) as a cofactor. Requires Mn(2+) as cofactor. The cofactor is Fe(2+).

The protein localises to the cytoplasm. It catalyses the reaction Release of N-terminal amino acids, preferentially methionine, from peptides and arylamides.. In terms of biological role, cotranslationally removes the N-terminal methionine from nascent proteins. The N-terminal methionine is often cleaved when the second residue in the primary sequence is small and uncharged (Met-Ala-, Cys, Gly, Pro, Ser, Thr, or Val). The protein is Methionine aminopeptidase 2 of Debaryomyces hansenii (strain ATCC 36239 / CBS 767 / BCRC 21394 / JCM 1990 / NBRC 0083 / IGC 2968) (Yeast).